The primary structure comprises 316 residues: MTNTSSSDFTLLGLLVNSEAAGIVFTVILAVFLGAVTANLVMIFLIQVDSRLHTPMYFLLSQLSIMDTLFICTTVPKLLADMVSKEKIISFVACGIQIFLYLTMIGSEFFLLGLMAYDCYVAVCNPLRYPVLMNRKKCLLLAAGAWFGGSLDGFLLTPITMNVPYCGSRSINHFFCEIPAVLKLACADTSLYETLMYICCVLMLLIPISIISTSYSLILLTIHRMPSAEGRKKAFTTCSSHLTVVSIFYGAAFYTYVLPQSFHTPEQDKVVSAFYTIVTPMLNPLIYSLRNKDVIGAFKKVFACCSSAQKVATSDA.

The Extracellular portion of the chain corresponds to 1 to 22; the sequence is MTNTSSSDFTLLGLLVNSEAAG. Asn3 carries N-linked (GlcNAc...) asparagine glycosylation. Residues 23 to 46 form a helical membrane-spanning segment; sequence IVFTVILAVFLGAVTANLVMIFLI. The Cytoplasmic segment spans residues 47-54; sequence QVDSRLHT. The chain crosses the membrane as a helical span at residues 55–76; it reads PMYFLLSQLSIMDTLFICTTVP. The Extracellular segment spans residues 77 to 97; the sequence is KLLADMVSKEKIISFVACGIQ. Residues Cys94 and Cys186 are joined by a disulfide bond. Residues 98–117 traverse the membrane as a helical segment; the sequence is IFLYLTMIGSEFFLLGLMAY. Residues 118–136 lie on the Cytoplasmic side of the membrane; sequence DCYVAVCNPLRYPVLMNRK. Residues 137–155 form a helical membrane-spanning segment; sequence KCLLLAAGAWFGGSLDGFL. Over 156–192 the chain is Extracellular; sequence LTPITMNVPYCGSRSINHFFCEIPAVLKLACADTSLY. The chain crosses the membrane as a helical span at residues 193 to 216; it reads ETLMYICCVLMLLIPISIISTSYS. Topologically, residues 217-233 are cytoplasmic; it reads LILLTIHRMPSAEGRKK. Residues 234–256 form a helical membrane-spanning segment; the sequence is AFTTCSSHLTVVSIFYGAAFYTY. Residues 257-269 are Extracellular-facing; the sequence is VLPQSFHTPEQDK. Residues 270 to 289 traverse the membrane as a helical segment; sequence VVSAFYTIVTPMLNPLIYSL. Topologically, residues 290–316 are cytoplasmic; it reads RNKDVIGAFKKVFACCSSAQKVATSDA.

This sequence belongs to the G-protein coupled receptor 1 family.

The protein resides in the cell membrane. Its function is as follows. Odorant receptor. This is Olfactory receptor 2T11 (OR2T11) from Homo sapiens (Human).